The following is a 500-amino-acid chain: 7-alpha-hydroxycholest-4-en-3-one 12-alpha-hydroxylase (500 aa).

The helical transmembrane segment at 2-21 threads the bilayer; it reads VLWGLLGALLMVMVGWLCLP. Residue Ser325 is modified to Phosphoserine. Position 439 (Cys439) interacts with heme.

It belongs to the cytochrome P450 family. Heme serves as cofactor. In terms of tissue distribution, liver (at protein level).

It is found in the endoplasmic reticulum membrane. Its subcellular location is the microsome membrane. It carries out the reaction 7alpha-hydroxycholest-4-en-3-one + reduced [NADPH--hemoprotein reductase] + O2 = 7alpha,12alpha-dihydroxycholest-4-en-3-one + oxidized [NADPH--hemoprotein reductase] + H2O + H(+). It catalyses the reaction 5beta-cholestane-3alpha,7alpha-diol + reduced [NADPH--hemoprotein reductase] + O2 = 5beta-cholestane-3alpha,7alpha,12alpha-triol + oxidized [NADPH--hemoprotein reductase] + H2O + H(+). The catalysed reaction is chenodeoxycholate + reduced [NADPH--hemoprotein reductase] + O2 = cholate + oxidized [NADPH--hemoprotein reductase] + H2O + H(+). Its pathway is lipid metabolism; bile acid biosynthesis. With respect to regulation, up-regulated upon treatment with streptozotocin. Its function is as follows. A cytochrome P450 monooxygenase involved in primary bile acid biosynthesis. Catalyzes the 12alpha-hydroxylation of 7alpha-hydroxy-4-cholesten-3-one, an intermediate metabolite in cholic acid biosynthesis. Controls biliary balance of cholic acid and chenodeoxycholic acid, ultimately regulating the intestinal absorption of dietary lipids. Mechanistically, uses molecular oxygen inserting one oxygen atom into a substrate, and reducing the second into a water molecule, with two electrons provided by NADPH via cytochrome P450 reductase (CPR; NADPH--hemoprotein reductase). This is 7-alpha-hydroxycholest-4-en-3-one 12-alpha-hydroxylase (CYP8B1) from Oryctolagus cuniculus (Rabbit).